The sequence spans 428 residues: Elongation factor 1-alpha (428 aa).

Residues 5–225 (KPILNVAFIG…DGFQPPEKPT (221 aa)) form the tr-type G domain. The G1 stretch occupies residues 14–21 (GHVDAGKS). 14 to 21 (GHVDAGKS) lines the GTP pocket. Ser21 is a Mg(2+) binding site. A G2 region spans residues 70–74 (GVTID). A G3 region spans residues 91 to 94 (DCPG). GTP contacts are provided by residues 91 to 95 (DCPGH) and 149 to 152 (NKMD). A G4 region spans residues 149–152 (NKMD). Residues 189 to 191 (ASL) are G5.

Belongs to the TRAFAC class translation factor GTPase superfamily. Classic translation factor GTPase family. EF-Tu/EF-1A subfamily.

The protein resides in the cytoplasm. It catalyses the reaction GTP + H2O = GDP + phosphate + H(+). Its function is as follows. GTP hydrolase that promotes the GTP-dependent binding of aminoacyl-tRNA to the A-site of ribosomes during protein biosynthesis. The polypeptide is Elongation factor 1-alpha (Methanococcus vannielii (strain ATCC 35089 / DSM 1224 / JCM 13029 / OCM 148 / SB)).